We begin with the raw amino-acid sequence, 321 residues long: Histidine N-alpha-methyltransferase (321 aa).

Tyr-56 contacts L-histidine. S-adenosyl-L-methionine-binding positions include Gly-86, Lys-92, Asp-113, and 141–142 (DF). L-histidine contacts are provided by residues Asn-166, Tyr-206, and 282–284 (EVS).

The protein belongs to the methyltransferase superfamily. EgtD family. In terms of assembly, monomer.

It carries out the reaction L-histidine + 3 S-adenosyl-L-methionine = hercynine + 3 S-adenosyl-L-homocysteine + 3 H(+). The protein operates within amino-acid biosynthesis; ergothioneine biosynthesis. Catalyzes the SAM-dependent triple methylation of the alpha-amino group of histidine to form hercynine, a step in the biosynthesis pathway of ergothioneine. Among all the proteinogenic amino acids, only L-histidine is a substrate. The sequence is that of Histidine N-alpha-methyltransferase from Mycolicibacterium smegmatis (strain ATCC 700084 / mc(2)155) (Mycobacterium smegmatis).